The primary structure comprises 384 residues: MAP kinase-activated protein kinase 3 (384 aa).

Met-1 carries the N-acetylmethionine modification. The interval 1-33 is disordered; it reads MDGETAGEKGSLVPPPGALGGSALGGAPAPGVR. The Protein kinase domain occupies 46–306; that stretch reads QLSKQVLGLG…IMQFMNHPWI (261 aa). Residues 52–60 and Lys-75 contribute to the ATP site; that span reads LGLGVNGKV. The active-site Proton acceptor is the Asp-168. A Phosphothreonine; by MAPK14 modification is found at Thr-203. Ser-253 carries the phosphoserine; by MAPK14 modification. Phosphoserine; by autocatalysis is present on Ser-309. Positions 309–345 are autoinhibitory helix; that stretch reads SMVVPQTPLYTARVLQEDKDHWDDVKEEMTSALATMR. Thr-315 is modified (phosphothreonine; by MAPK14). The Nuclear export signal (NES) motif lies at 337-346; it reads MTSALATMRV. The interval 347-371 is p38 MAPK-binding site; that stretch reads DYDQVKIKDLKTSNNRLLNKRRKKQ. Short sequence motifs (bipartite nuclear localization signal) lie at residues 352-355 and 366-370; these read KIKD and KRRKK. The tract at residues 359 to 384 is disordered; that stretch reads SNNRLLNKRRKKQAGSSSASQGCNNQ. The segment covering 372–384 has biased composition (polar residues); it reads AGSSSASQGCNNQ.

This sequence belongs to the protein kinase superfamily. CAMK Ser/Thr protein kinase family. As to quaternary structure, heterodimer with p38-alpha/MAPK14. The heterodimer with p38-alpha/MAPK14 forms a stable complex: molecules are positioned 'face to face' so that the ATP-binding sites of both kinases are at the heterodimer interface. Interacts with TCF3 and with polycomb proteins, such as PCH2 and BMI1/PCGF4. In terms of processing, phosphorylated and activated by MAPK1/ERK2 and MAPK3/ERK1. Phosphorylated and activated by MAP kinase p38-alpha/MAPK14 at Thr-201, Ser-251 and Thr-313. Isoform 3 is degraded following phosphorylation at Thr-203. As to expression, ubiquitously expressed (at protein level). Isoform 3 is expressed in skeletal muscles and heart.

The protein localises to the nucleus. Its subcellular location is the cytoplasm. The enzyme catalyses L-seryl-[protein] + ATP = O-phospho-L-seryl-[protein] + ADP + H(+). It catalyses the reaction L-threonyl-[protein] + ATP = O-phospho-L-threonyl-[protein] + ADP + H(+). Activated following phosphorylation by p38-alpha/MAPK14 following various stresses. Inhibited by ligand 5B (2'-[2-(1,3-benzodioxol-5-yl)pyrimidin-4-yl]-5',6'-dihydrospiro[piperidine-4,7'-pyrrolo[3,2-c]pyridin]- 4'(1'h)-one) and ligand P4O (2-[2-(2-fluorophenyl)pyridin-4-yl]-1,5,6,7-tetrahydro- 4h-pyrrolo[3,2-c]pyridin-4-one), 2 ATP-competitive inhibitors. Its function is as follows. Stress-activated serine/threonine-protein kinase involved in cytokines production, endocytosis, cell migration, chromatin remodeling and transcriptional regulation. Following stress, it is phosphorylated and activated by MAP kinase p38-alpha/MAPK14, leading to phosphorylation of substrates. Phosphorylates serine in the peptide sequence, Hyd-X-R-X(2)-S, where Hyd is a large hydrophobic residue. MAPKAPK2 and MAPKAPK3, share the same function and substrate specificity, but MAPKAPK3 kinase activity and level in protein expression are lower compared to MAPKAPK2. Phosphorylates HSP27/HSPB1, KRT18, KRT20, RCSD1, RPS6KA3, TAB3 and TTP/ZFP36. Mediates phosphorylation of HSP27/HSPB1 in response to stress, leading to dissociate HSP27/HSPB1 from large small heat-shock protein (sHsps) oligomers and impair their chaperone activities and ability to protect against oxidative stress effectively. Involved in inflammatory response by regulating tumor necrosis factor (TNF) and IL6 production post-transcriptionally: acts by phosphorylating AU-rich elements (AREs)-binding proteins, such as TTP/ZFP36, leading to regulate the stability and translation of TNF and IL6 mRNAs. Phosphorylation of TTP/ZFP36, a major post-transcriptional regulator of TNF, promotes its binding to 14-3-3 proteins and reduces its ARE mRNA affinity leading to inhibition of dependent degradation of ARE-containing transcript. Involved in toll-like receptor signaling pathway (TLR) in dendritic cells: required for acute TLR-induced macropinocytosis by phosphorylating and activating RPS6KA3. Also acts as a modulator of Polycomb-mediated repression. This Mus musculus (Mouse) protein is MAP kinase-activated protein kinase 3 (Mapkapk3).